The chain runs to 108 residues: Large ribosomal subunit protein eL36x (108 aa).

Disordered stretches follow at residues 13 to 34 and 75 to 108; these read GHVV…KTSK and KLGT…EKKK. Over residues 75–84 the composition is skewed to basic residues; that stretch reads KLGTHKRAKR.

The protein belongs to the eukaryotic ribosomal protein eL36 family.

The protein is Large ribosomal subunit protein eL36x (RPL36C) of Arabidopsis thaliana (Mouse-ear cress).